Reading from the N-terminus, the 158-residue chain is Rhombotin-2 (158 aa).

LIM zinc-binding domains are found at residues 30–89 (CGGC…RLFG) and 94–153 (CASC…EWTK).

Interacts via its LIM domains with ELF2 and LDB1. Also interacts with basic helix-loop-helix protein TAL1/SCL and can assemble in a complex with LMO2 and TAL1/SCL. Interacts with BEX2 and KDM5A.

It is found in the nucleus. Acts with TAL1/SCL to regulate red blood cell development. Also acts with LDB1 to maintain erythroid precursors in an immature state. The polypeptide is Rhombotin-2 (LMO2) (Homo sapiens (Human)).